The primary structure comprises 106 residues: MNDSEFHQLADQLILYIEGQLDNYDGNADIDCETNGGVMTLSFDNDSKIIINRQEPFHQIWLATKGGGYHFDYKEGQWICDRSGDNFLTMLAYAITEQSGEQFSFP.

The protein belongs to the frataxin family.

In terms of biological role, involved in iron-sulfur (Fe-S) cluster assembly. May act as a regulator of Fe-S biogenesis. This Photorhabdus laumondii subsp. laumondii (strain DSM 15139 / CIP 105565 / TT01) (Photorhabdus luminescens subsp. laumondii) protein is Iron-sulfur cluster assembly protein CyaY.